Consider the following 1314-residue polypeptide: Enfumafungin synthase efuA (1314 aa).

The segment at M1 to G680 is terpenne cyclase. PFTB repeat units follow at residues L19 to L62 and G66 to G107. Transmembrane regions (helical) follow at residues F133–M153, A155–A175, and Y230–L250. Residues L260–S300 form a PFTB 3 repeat. Residue D395 is the Proton donor of the active site. 2 PFTB repeats span residues V417–V458 and C546–R597. Residues I681 to K1314 form a glycosyltransferase region. A helical transmembrane segment spans residues A1200–K1220. Positions D1289–K1314 are disordered. The span at A1292 to G1302 shows a compositional bias: low complexity.

This sequence in the N-terminal section; belongs to the terpene cyclase/mutase family. It in the C-terminal section; belongs to the glycosyltransferase 28 family.

The protein localises to the membrane. The protein operates within secondary metabolite biosynthesis; terpenoid biosynthesis. In terms of biological role, terpene cyclase-glycosyl transferase fusion protein; part of the gene cluster that mediates the biosynthesis of enfumafungin, a glycosylated fernene-type triterpenoid with potent antifungal activity, mediated by its interaction with beta-1,3-glucan synthase and the fungal cell wall. The pathway begins with the terpene cyclase-glycosyl transferase fusion protein that most likely uses 2,3-oxidosqualene as substrate and catalyzes glycosylation immediately after cyclization. The fernene glycoside then could be processed by the desaturase efuI which catalyzes isomerization of a double bond established by efuA to form the core structure. The latter would then undergo a series of hydroxylations in unknown order at C-2, C-19, C-23 and C-25, which would be catalyzed by two of the three cytochrome P450 monooxygenases efuB, efuG or efuH. The hydroxy-group at C-25 becomes oxidized by the dehydrogenase efuE to enable a spontaneous, non-enzymatic hemiacetal formation with C-23. After hydroxylation at C-2, acetylation by the acetyltransferase efuC takes place. The final steps in enfumafungin biosynthesis require expansion of the 5-membered ring by lactonization via a Baeyer-Villiger reaction mediated by one of the BGC's cytochrome P450 monooxygenases (efuB, efuG or efuH) followed by ring cleavage. This type of reaction would establish a double bond between C-20 and C-21 which could be reduced by the reductase efuL to form the final product. The chain is Enfumafungin synthase efuA from Hormonema carpetanum.